Consider the following 396-residue polypeptide: Acetate kinase (396 aa).

Asparagine 8 contributes to the Mg(2+) binding site. ATP is bound at residue lysine 15. Arginine 89 is a binding site for substrate. The Proton donor/acceptor role is filled by aspartate 146. ATP contacts are provided by residues 206–210, 283–285, and 331–335; these read HIGNG, DMR, and GIGEN. Glutamate 383 is a Mg(2+) binding site.

This sequence belongs to the acetokinase family. In terms of assembly, homodimer. Requires Mg(2+) as cofactor. Mn(2+) serves as cofactor.

It is found in the cytoplasm. The enzyme catalyses acetate + ATP = acetyl phosphate + ADP. It participates in metabolic intermediate biosynthesis; acetyl-CoA biosynthesis; acetyl-CoA from acetate: step 1/2. Functionally, catalyzes the formation of acetyl phosphate from acetate and ATP. Can also catalyze the reverse reaction. This Streptococcus gordonii (strain Challis / ATCC 35105 / BCRC 15272 / CH1 / DL1 / V288) protein is Acetate kinase.